A 533-amino-acid chain; its full sequence is Aspartic proteinase sxa1 (533 aa).

The first 23 residues, 1–23, serve as a signal peptide directing secretion; that stretch reads MKASFFVFAISALQALQASVASA. One can recognise a Peptidase A1 domain in the interval 76–434; that stretch reads YFANLTLGSN…DWDAQKIGLA (359 aa). N-linked (GlcNAc...) asparagine glycosylation occurs at Asn-79. The active site involves Asp-94. 8 N-linked (GlcNAc...) asparagine glycosylation sites follow: Asn-106, Asn-138, Asn-153, Asn-166, Asn-271, Asn-278, Asn-299, and Asn-319. Asp-325 is a catalytic residue. Asn-439 is a glycosylation site (N-linked (GlcNAc...) asparagine).

Belongs to the peptidase A1 family.

Involved in degradation or processing of the mating pheromones. Its loss may cause a persistent response to the pheromones. It may cleave the mating pheromone M-factor. May be involved in processing of zymogens that are required for zygote formation. This Schizosaccharomyces pombe (strain 972 / ATCC 24843) (Fission yeast) protein is Aspartic proteinase sxa1 (sxa1).